The chain runs to 254 residues: Probable glucose-1-phosphate cytidylyltransferase (254 aa).

Substrate contacts are provided by residues 6-10 (LCGGK), 11-13 (GTR), Lys-23, Thr-103, Arg-108, and Gly-126. Mg(2+) is bound by residues Asp-127 and Asp-232.

Belongs to the glucose-1-phosphate cytidylyltransferase family. Mg(2+) serves as cofactor.

The enzyme catalyses alpha-D-glucose 1-phosphate + CTP + H(+) = CDP-D-glucose + diphosphate. Catalyzes the transfer of a CMP moiety from CTP to glucose 1-phosphate. This Bacillus subtilis (strain 168) protein is Probable glucose-1-phosphate cytidylyltransferase (yfnH).